A 343-amino-acid polypeptide reads, in one-letter code: MSITKNDKNTRTTGRPTLNEVARRAGVSPITASRALRGVASVAEELAQKVRDAARELGYVANPAARALASAQSHSVAVLVPSLANLLFIETLEAIHAVLRPQGLEVLIGNFHYSRNEEEDLIRNYLAYQPRGLLLTGFERTESARRMIEASGIPCVYMMDLDSGSGLNCVGFSQLRAGEAAAEHLLARGRRRLAYIGAQLDQRTLLRGEGFRRALQKAGCYDPGLEILTPRPSSVALGGELFVQLLASQPQVDGVFFCNDDLAQGALLEALRRGVKVPEQIAVLGFNDLPGSDCTVPRLSSIRTPREAIGRRAAEQLLALIAGKEVRDSALDMGFELMAREST.

Positions Pro16–Ser70 constitute an HTH lacI-type domain. The segment at residues Leu18 to Arg37 is a DNA-binding region (H-T-H motif).

With respect to regulation, free GntR fails to recognize gluconate and 6-phosphogluconate, whereas the GntR/DNA complexes recognize both ligands. It is therefore likely that GntR DNA binding induces structural changes that permit GntR to recognize effectors. Involved in the regulation of glucose metabolism. Represses its own expression as well as that of the gluconate permease GntP. It employs an effector mediated de-repression mechanism: in the absence of ligand, GntR binds to the gntR and gntP promoters and represses their expression. The release of promoter bound GntR is induced by gluconate and 6-phosphogluconate that bind with similar apparent affinities to the GntR/DNA complex. The release of GntR leads to transcription of the genes. This is HTH-type transcriptional regulator GntR from Pseudomonas aeruginosa (strain ATCC 15692 / DSM 22644 / CIP 104116 / JCM 14847 / LMG 12228 / 1C / PRS 101 / PAO1).